Reading from the N-terminus, the 841-residue chain is Alpha-glucuronidase A (841 aa).

A signal peptide spans Met-1–Ala-20. Residues Asn-51, Asn-76, Asn-149, Asn-222, Asn-279, Asn-310, Asn-343, Asn-450, Asn-465, Asn-527, Asn-576, Asn-682, Asn-723, and Asn-732 are each glycosylated (N-linked (GlcNAc...) asparagine).

It belongs to the glycosyl hydrolase 67 family.

It is found in the secreted. The catalysed reaction is an alpha-D-glucuronoside + H2O = D-glucuronate + an alcohol. Its function is as follows. Alpha-glucuronidase involved in the hydrolysis of xylan, a major structural heterogeneous polysaccharide found in plant biomass representing the second most abundant polysaccharide in the biosphere, after cellulose. Releases 4-O-methylglucuronic acid from xylan. This chain is Alpha-glucuronidase A (aguA), found in Aspergillus tubingensis.